A 77-amino-acid polypeptide reads, in one-letter code: Dermaseptin-B9 (77 aa).

Positions 1-22 are cleaved as a signal peptide; sequence MAFLKKSLFLVLFLGLVSLSVC. 2 propeptides span residues 23–43 and 76–77; these read EEEK…QSEE and EQ.

This sequence belongs to the frog skin active peptide (FSAP) family. Dermaseptin subfamily. In terms of tissue distribution, expressed by the skin glands.

It is found in the secreted. In terms of biological role, has antimicrobial activity. Exhibits a bactericidal activity towards several species of mollicutes, firmicutes and gracilicutes. This peptide is membranotropic and it efficiently depolarizes the plasma membrane. This Phyllomedusa bicolor (Two-colored leaf frog) protein is Dermaseptin-B9 (DRG3).